Here is a 236-residue protein sequence, read N- to C-terminus: 2-C-methyl-D-erythritol 4-phosphate cytidylyltransferase (236 aa).

Belongs to the IspD/TarI cytidylyltransferase family. IspD subfamily.

The enzyme catalyses 2-C-methyl-D-erythritol 4-phosphate + CTP + H(+) = 4-CDP-2-C-methyl-D-erythritol + diphosphate. It functions in the pathway isoprenoid biosynthesis; isopentenyl diphosphate biosynthesis via DXP pathway; isopentenyl diphosphate from 1-deoxy-D-xylulose 5-phosphate: step 2/6. Functionally, catalyzes the formation of 4-diphosphocytidyl-2-C-methyl-D-erythritol from CTP and 2-C-methyl-D-erythritol 4-phosphate (MEP). The chain is 2-C-methyl-D-erythritol 4-phosphate cytidylyltransferase from Alkaliphilus oremlandii (strain OhILAs) (Clostridium oremlandii (strain OhILAs)).